The chain runs to 120 residues: Ribosome-binding factor A (120 aa).

Belongs to the RbfA family. As to quaternary structure, monomer. Binds 30S ribosomal subunits, but not 50S ribosomal subunits or 70S ribosomes.

Its subcellular location is the cytoplasm. Functionally, one of several proteins that assist in the late maturation steps of the functional core of the 30S ribosomal subunit. Associates with free 30S ribosomal subunits (but not with 30S subunits that are part of 70S ribosomes or polysomes). Required for efficient processing of 16S rRNA. May interact with the 5'-terminal helix region of 16S rRNA. The sequence is that of Ribosome-binding factor A from Verminephrobacter eiseniae (strain EF01-2).